The sequence spans 357 residues: Zinc finger protein 830 (357 aa).

The C2H2-type zinc finger occupies 47–69; it reads CVVCNIQIKSELLWPAHILGKQH. Disordered regions lie at residues 98 to 126, 157 to 194, and 231 to 255; these read RKGS…TKLP, DDDE…ADRL, and ALPE…PKDQ. The segment covering 99 to 115 has biased composition (basic and acidic residues); that stretch reads KGSEPENQESKRIKGTE. Positions 157-168 are enriched in acidic residues; that stretch reads DDDEVEGEEYEN. The span at 242–255 shows a compositional bias: basic and acidic residues; it reads ADAKVRKVDAPKDQ. Positions 279-325 form a coiled coil; sequence AEEDEEGRLDRQIDEIDEQIECYRRVEHLRDLKDTLQDAKMEVLKSK.

The protein localises to the nucleus. It localises to the chromosome. Its subcellular location is the nucleus speckle. Functionally, may act as an important regulator of the cell cycle that participates in the maintenance of genome integrity. The polypeptide is Zinc finger protein 830 (Xenopus tropicalis (Western clawed frog)).